Reading from the N-terminus, the 519-residue chain is Probable cytochrome P450 513D1 (519 aa).

The helical transmembrane segment at 1–21 (MGISSIIIILFIIVLLKKLIK) threads the bilayer. Cys-464 contributes to the heme binding site.

It belongs to the cytochrome P450 family. Requires heme as cofactor.

It is found in the membrane. This Dictyostelium discoideum (Social amoeba) protein is Probable cytochrome P450 513D1 (cyp513D1).